Here is a 441-residue protein sequence, read N- to C-terminus: MDIKNMIINNPLIKNMIDKKEVGWTNPKEMNYTEYEKKLPLKDQELKEAEERLKRFAPFIKKVFPETEETYGIIESPLEEIFNMQKELEKKYHTEILGKLYLKMDSHLPVAGSIKARGGVYEVLKHAEELAMEAGLLKLEDDYSILADKKFKDFFSKYKIQVGSTGNLGLSIGITSAALGFQVIVHMSADAKKWKKDMLRSKGVQVIEYESDYGKAVEEGRKNSDADPMSYFVDDEKSMNLFLGYTVAASRIKKQFDKKGIVINKEHPLIVYIPCGVGGAPGGVAYGLKRIFKENVYIFFVEPVLAPCMLLGMQTGLHEKISVYDVGIHGITHADGLAVARPSGLVGRLMEPILSGIFTVDDYKLYDYLRILNETENKRIEPSSCAAFEGVVSLLKYEDSKKYIENRIGKNINNVYHVCWATGGKMVPQEDMEIFLNTYLK.

An N6-(pyridoxal phosphate)lysine modification is found at Lys-115.

The protein belongs to the serine/threonine dehydratase family. DsdA subfamily. Pyridoxal 5'-phosphate serves as cofactor.

It catalyses the reaction D-serine = pyruvate + NH4(+). The chain is Probable D-serine dehydratase from Fusobacterium nucleatum subsp. nucleatum (strain ATCC 25586 / DSM 15643 / BCRC 10681 / CIP 101130 / JCM 8532 / KCTC 2640 / LMG 13131 / VPI 4355).